Consider the following 156-residue polypeptide: ATP synthase subunit b (156 aa).

Residues 7-29 (LFAQMVVFLVLAWFTMKFVWPPL) form a helical membrane-spanning segment.

Belongs to the ATPase B chain family. In terms of assembly, F-type ATPases have 2 components, F(1) - the catalytic core - and F(0) - the membrane proton channel. F(1) has five subunits: alpha(3), beta(3), gamma(1), delta(1), epsilon(1). F(0) has three main subunits: a(1), b(2) and c(10-14). The alpha and beta chains form an alternating ring which encloses part of the gamma chain. F(1) is attached to F(0) by a central stalk formed by the gamma and epsilon chains, while a peripheral stalk is formed by the delta and b chains.

Its subcellular location is the cell inner membrane. F(1)F(0) ATP synthase produces ATP from ADP in the presence of a proton or sodium gradient. F-type ATPases consist of two structural domains, F(1) containing the extramembraneous catalytic core and F(0) containing the membrane proton channel, linked together by a central stalk and a peripheral stalk. During catalysis, ATP synthesis in the catalytic domain of F(1) is coupled via a rotary mechanism of the central stalk subunits to proton translocation. Functionally, component of the F(0) channel, it forms part of the peripheral stalk, linking F(1) to F(0). This is ATP synthase subunit b from Burkholderia lata (strain ATCC 17760 / DSM 23089 / LMG 22485 / NCIMB 9086 / R18194 / 383).